The primary structure comprises 130 residues: 3-aminoacrylate deaminase RutC (130 aa).

The protein belongs to the RutC family.

It catalyses the reaction (Z)-3-aminoacrylate + H2O + H(+) = 3-oxopropanoate + NH4(+). Functionally, involved in pyrimidine catabolism. Catalyzes the deamination of 3-aminoacrylate to malonic semialdehyde, a reaction that can also occur spontaneously. RutC may facilitate the reaction and modulate the metabolic fitness, rather than catalyzing essential functions. The sequence is that of 3-aminoacrylate deaminase RutC from Klebsiella pneumoniae (strain 342).